Here is a 572-residue protein sequence, read N- to C-terminus: Golgi apyrase (572 aa).

Residues 1 to 470 (MVRKYGIFID…KHWMRLFPNK (470 aa)) lie on the Lumenal side of the membrane. The Proton acceptor role is filled by glutamate 145. The helical transmembrane segment at 471–491 (LFFILSFIFCLFFLFSLVLFG) threads the bilayer. The Cytoplasmic portion of the chain corresponds to 492–572 (YDPKRRQRFK…RERTPRSPFP (81 aa)).

It belongs to the GDA1/CD39 NTPase family. The cofactor is Ca(2+). It depends on Mg(2+) as a cofactor. Mn(2+) serves as cofactor.

The protein resides in the golgi apparatus. Its subcellular location is the membrane. It catalyses the reaction a ribonucleoside 5'-triphosphate + 2 H2O = a ribonucleoside 5'-phosphate + 2 phosphate + 2 H(+). The protein operates within protein modification; protein glycosylation. Its function is as follows. Catalyzes the hydrolysis of phosphoanhydride bonds of nucleoside tri- and di-phosphates. Required for Golgi glycosylation and cell wall integrity. Involved in N-mannosylation of proteins in Golgi. The sequence is that of Golgi apyrase from Schizosaccharomyces pombe (strain 972 / ATCC 24843) (Fission yeast).